The following is a 372-amino-acid chain: Proton-coupled zinc antiporter SLC30A2 (372 aa).

The Cytoplasmic segment spans residues 1–140 (MEAKEKQHLL…TMNFGWQRAE (140 aa)). Positions 51 to 54 (HHCH) match the Mitochondrial localization signal motif. Positions 53, 106, and 110 each coordinate Zn(2+). Residues 141–161 (ILGALVSVLSIWVVTGVLVYL) form a helical membrane-spanning segment. Over 162 to 175 (AVERLISGDYEIDG) the chain is Lumenal. Residues 176-196 (GTMLITSGCAVAVNIIMGLTL) traverse the membrane as a helical segment. Residues 197–220 (HQSGHGHSHGTTNQQEENPSVRAA) are Cytoplasmic-facing. A helical transmembrane segment spans residues 221-241 (FIHVIGDFMQSMGVLVAAYIL). Residues His223 and Asp227 each coordinate Zn(2+). Residues 242–249 (YFKPEYKY) lie on the Lumenal side of the membrane. A helical membrane pass occupies residues 250 to 270 (VDPICTFVFSILVLGTTLTIL). Over 271-304 (RDVILVLMEGTPKGVDFTAVRDLLLSVEGVEALH) the chain is Cytoplasmic. The Lysosomal targeting motif signature appears at 294-295 (LL). A Phosphoserine modification is found at Ser296. The Zn(2+) site is built by His304, His321, and Glu355. The helical transmembrane segment at 305–325 (SLHIWALTVAQPVLSVHIAIA) threads the bilayer. At 326–372 (QNTDAQAVLKTASSRLQGKFHFHTVTIQIEDYSEDMKDCQACQGPSD) the chain is on the lumenal side.

It belongs to the cation diffusion facilitator (CDF) transporter (TC 2.A.4) family. SLC30A subfamily. Homodimer. Interacts (via lysosomal targeting motif) with AP3D1; in AP-3-mediated transport to lysosomes. Interacts with TMEM163. Post-translationally, phosphorylated at Ser-296. Phosphorylation at Ser-296 prevents localization to lysosomes. Dephosphorylation of Ser-296 which triggers localization to lysosomes, accumulation of zinc into lysosomes and lysosomal-mediated cell death is induced by TNF-alpha.

Its subcellular location is the cytoplasmic vesicle. It localises to the secretory vesicle membrane. The protein localises to the zymogen granule membrane. It is found in the endosome membrane. The protein resides in the lysosome membrane. Its subcellular location is the mitochondrion inner membrane. It localises to the cell membrane. The catalysed reaction is Zn(2+)(in) + 2 H(+)(out) = Zn(2+)(out) + 2 H(+)(in). In terms of biological role, electroneutral proton-coupled antiporter concentrating zinc ions into a variety of intracellular organelles including endosomes, zymogen granules and mitochondria. Thereby, plays a crucial role in cellular zinc homeostasis to confer upon cells protection against its potential cytotoxicity. Regulates the zinc concentration of milk, through the transport of zinc ions into secretory vesicles of mammary cells. By concentrating zinc ions into lysosomes participates to lysosomal-mediated cell death during early mammary gland involution. Its function is as follows. Electroneutral proton-coupled antiporter mediating the efflux of zinc ions through the plasma membrane. The polypeptide is Proton-coupled zinc antiporter SLC30A2 (Homo sapiens (Human)).